The primary structure comprises 300 residues: ATP-dependent (S)-NAD(P)H-hydrate dehydratase (300 aa).

The YjeF C-terminal domain maps to 14-293; that stretch reads LLALFKTVVP…NQIPSVFQTE (280 aa). Residues Gly-114 and 167 to 173 contribute to the (6S)-NADPHX site; that span reads NVMEFQR. ATP is bound by residues 198-202 and 219-228; these read KGAND and GSGRRCGGQG. Asp-229 provides a ligand contact to (6S)-NADPHX.

The protein belongs to the NnrD/CARKD family. Mg(2+) is required as a cofactor.

It carries out the reaction (6S)-NADHX + ATP = ADP + phosphate + NADH + H(+). The catalysed reaction is (6S)-NADPHX + ATP = ADP + phosphate + NADPH + H(+). Catalyzes the dehydration of the S-form of NAD(P)HX at the expense of ATP, which is converted to ADP. Together with NAD(P)HX epimerase, which catalyzes the epimerization of the S- and R-forms, the enzyme allows the repair of both epimers of NAD(P)HX, a damaged form of NAD(P)H that is a result of enzymatic or heat-dependent hydration. The chain is ATP-dependent (S)-NAD(P)H-hydrate dehydratase from Drosophila melanogaster (Fruit fly).